A 503-amino-acid chain; its full sequence is MGIIIGLIIVSVALIISLCSLLYILTSKSQKVLNEKKIKEAKNERKKILSDTYREINEQKKSFEENLQFEKNKLEIAKQNIENENNLLIKERAIIIKQQEAIDVKNTDLDKRIKNYSDKREELIKRLEIISNMTSFEAKAELMKNVESKIQYEIVSQIKQAENLAHARAKELSNNIILSAMERFKTDIVNEKTTNLVKLPNDDIKGWIIGKDGRNLKTFEQLAGVEIIVDDTPEVVTISSFNPIRREIATKTLEKLLIDKRIQPIKIEKELKVQEKLIDETILEIGYQVMDELGIHDMDKELVKLVGKLKYRTSYGQNVLLHSVEVAKIASSIASELGLNAKQALRAGLLHDIGKAIDFEKTGSHVFLGVEVARKYGEDEVIINSIEAHHEDVAKESEIAVIVAIADAISASKPGARNNSIEDFIVRMKEIEKIGNSIPGISKTYAFQAGRQIRVIVDPVTTDDKDLAGILETLKNDLKNSVIIPGEITITAIREKREILVFN.

A helical transmembrane segment spans residues 2–22 (GIIIGLIIVSVALIISLCSLL). In terms of domain architecture, KH spans 193–253 (TTNLVKLPND…IRREIATKTL (61 aa)). The 94-residue stretch at 319 to 412 (VLLHSVEVAK…VAIADAISAS (94 aa)) folds into the HD domain.

Belongs to the RNase Y family.

The protein resides in the cell membrane. Its function is as follows. Endoribonuclease that initiates mRNA decay. This is Ribonuclease Y from Mesoplasma florum (strain ATCC 33453 / NBRC 100688 / NCTC 11704 / L1) (Acholeplasma florum).